A 181-amino-acid polypeptide reads, in one-letter code: Inner membrane-spanning protein YciB (181 aa).

5 helical membrane-spanning segments follow: residues 22–42 (IYTA…ILYF), 50–70 (MHLV…AFHD), 72–92 (AFIK…LAVS), 118–138 (VTWY…YVAF), and 148–168 (FKVF…VFYI).

It belongs to the YciB family.

The protein resides in the cell inner membrane. Functionally, plays a role in cell envelope biogenesis, maintenance of cell envelope integrity and membrane homeostasis. The protein is Inner membrane-spanning protein YciB of Shewanella denitrificans (strain OS217 / ATCC BAA-1090 / DSM 15013).